The primary structure comprises 546 residues: Hexose transporter HXT10 (546 aa).

Residues 1–44 (MVSSSVSILGTSAKASTSLSRKDEIKLTPETREASLDIPYKPII) are Cytoplasmic-facing. The helical transmembrane segment at 45-65 (AYWTVMGLCLMIAFGGFIFGW) threads the bilayer. Residues 66 to 100 (DTGTISGFINQTDFKRRFGELQRDGSFQLSDVRTG) are Extracellular-facing. Asparagine 75 is a glycosylation site (N-linked (GlcNAc...) asparagine). The chain crosses the membrane as a helical span at residues 101–121 (LIVGIFNIGCALGGLTLGRLG). At 122–127 (DIYGRK) the chain is on the cytoplasmic side. The helical transmembrane segment at 128-148 (IGLMCVILVYVVGIVIQIASS) threads the bilayer. The Extracellular segment spans residues 149 to 158 (DKWYQYFIGR). The chain crosses the membrane as a helical span at residues 159 to 179 (IVSGMGVGGVAVLSPTLISEI). Residues 180–185 (SPKHLR) are Cytoplasmic-facing. The helical transmembrane segment at 186-206 (GTCVSFYQLMITLGIFLGYCT) threads the bilayer. At 207-220 (NYGTKKYSNSIQWR) the chain is on the extracellular side. Residues 221-241 (VPLGLCFAWAIFMVIGMVMVP) traverse the membrane as a helical segment. At 242–324 (ESPRYLVEKG…IQSLQQLTGC (83 aa)) the chain is on the cytoplasmic side. Residues 325–341 (NYFFYYGTTIFNAVGMQ) form a helical membrane-spanning segment. At 342-347 (DSFETS) the chain is on the extracellular side. Residues 348-365 (IVLGAVNFASTFVALYIV) traverse the membrane as a helical segment. The Cytoplasmic portion of the chain corresponds to 366–372 (DKFGRRK). A helical transmembrane segment spans residues 373 to 393 (CLLWGSASMAICFVIFATVGV). Over 394–415 (TRLWPQGKDQPSSQSAGNVMIV) the chain is Extracellular. A helical membrane pass occupies residues 416 to 436 (FTCFFIFSFAITWAPIAYVIV). The Cytoplasmic segment spans residues 437–453 (AETYPLRVKNRAMAIAV). The chain crosses the membrane as a helical span at residues 454-474 (GANWMWGFLIGFFTPFITRSI). Glycine 475 is a topological domain (extracellular). A helical membrane pass occupies residues 476–496 (FSYGYVFMGCLIFSYFYVFFF). At 497–546 (VCETKGLTLEEVNEMYEERIKPWKSGGWIPSSRRTPQPTSSTPLVIVDSK) the chain is on the cytoplasmic side.

The protein belongs to the major facilitator superfamily. Sugar transporter (TC 2.A.1.1) family.

It localises to the membrane. In terms of biological role, probable glucose transporter. In Saccharomyces cerevisiae (strain ATCC 204508 / S288c) (Baker's yeast), this protein is Hexose transporter HXT10 (HXT10).